A 632-amino-acid chain; its full sequence is SH2B adapter protein 2 (632 aa).

Phosphotyrosine is present on Tyr52. Ser141 carries the post-translational modification Phosphoserine. Positions 193-306 (DIQREGALRF…WVADIQGCVD (114 aa)) constitute a PH domain. At Ser310 the chain carries Phosphoserine. Positions 381-409 (TLESPGGSGSDSNNTGEQGAETDPEAEPE) are disordered. A compositionally biased stretch (acidic residues) spans 400 to 409 (AETDPEAEPE). The SH2 domain maps to 417–515 (WFHGTLSRVK…SADITLRSYV (99 aa)). Disordered stretches follow at residues 516–537 (RAQD…SPAC) and 558–632 (ASPS…YSFY). Residues 519–532 (DPPPEPGPTPPAAP) show a composition bias toward pro residues. Composition is skewed to low complexity over residues 558–579 (ASPS…AASG) and 604–626 (EAVA…RAVE). Tyr629 is subject to Phosphotyrosine.

This sequence belongs to the SH2B adapter family. Homodimer. Interacts with KIT/c-KIT, SHC1, EPOR, PDGFR, VAV1 and VAV3. Interacts (via N-terminal region) with SHC1. Interacts (via the phosphorylated C-terminus) with GRB2. Interacts (via its SH2 domain) with EPOR, INSR and KIT. Interacts with GRB2 after B-cell antigen receptor stimulation. Interacts (via PH domain) with VAV3. Interacts with NTRK1, NTRK2 and NTRK3 (phosphorylated); after stimulation of the receptor by its extracellular ligand and subsequent autophosphorylation of the receptor. Binds INSR, GRB2, ASB6 and CAP. Insulin stimulation leads to dissociation of CAP. Binds CBS only when SH2B2/APS has become phosphorylated. INSR binding does not depend on the phosphorylation of SH2B2/APS. In terms of processing, tyrosine phosphorylated by JAK2, KIT and other kinases activated by B-cell receptor in response to stimulation with cytokines, IL3, IL5, PDGF, IGF1, IGF2, CSF2/GM-CSF and cross-linking of the B-cell receptor complex. In terms of tissue distribution, expressed in spleen, prostate, testis, uterus, small intestine and skeletal muscle. Among hematopoietic cell lines, expressed exclusively in B-cells. Not expressed in most tumor cell lines.

It localises to the cytoplasm. The protein localises to the cell membrane. Adapter protein for several members of the tyrosine kinase receptor family. Involved in multiple signaling pathways. May be involved in coupling from immunoreceptor to Ras signaling. Acts as a negative regulator of cytokine signaling in collaboration with CBL. Binds to EPOR and suppresses EPO-induced STAT5 activation, possibly through a masking effect on STAT5 docking sites in EPOR. Suppresses PDGF-induced mitogenesis. May induce cytoskeletal reorganization via interaction with VAV3. The chain is SH2B adapter protein 2 (SH2B2) from Homo sapiens (Human).